A 958-amino-acid chain; its full sequence is Translation initiation factor IF-2 (958 aa).

2 disordered regions span residues 67 to 95 (APAA…APAP) and 111 to 355 (PAPA…VPRG). Pro residues predominate over residues 75–95 (APAPGPAAPKAPAPAPAAPAP). Residues 140–161 (PAPARQGGQAPRPGGPRPGNNP) are compositionally biased toward low complexity. Basic and acidic residues predominate over residues 195–206 (RGERRNDGERPG). Residues 209–221 (RPAAGAGGPRPAA) are compositionally biased toward low complexity. The segment covering 228–241 (PGAPRPGAPRPGAP) has biased composition (pro residues). Over residues 268 to 325 (GGAGRPGGAGRPGGGPGRPGGAPGAGTGGGAPAGGGFGKGGRGRGGTQGAFGKGGAGR) the composition is skewed to gly residues. A compositionally biased stretch (basic residues) spans 326–335 (GKQRKSKRAK). The tr-type G domain maps to 450–621 (ARAPVVTVMG…AVLLTADAAL (172 aa)). Positions 459–466 (GHVDHGKT) are G1. 459 to 466 (GHVDHGKT) contacts GTP. Residues 484–488 (GITQH) are G2. A G3 region spans residues 509–512 (DTPG). Residues 509-513 (DTPGH) and 563-566 (NKID) contribute to the GTP site. The segment at 563-566 (NKID) is G4. The segment at 599 to 601 (SAR) is G5.

This sequence belongs to the TRAFAC class translation factor GTPase superfamily. Classic translation factor GTPase family. IF-2 subfamily.

The protein localises to the cytoplasm. In terms of biological role, one of the essential components for the initiation of protein synthesis. Protects formylmethionyl-tRNA from spontaneous hydrolysis and promotes its binding to the 30S ribosomal subunits. Also involved in the hydrolysis of GTP during the formation of the 70S ribosomal complex. The polypeptide is Translation initiation factor IF-2 (Paenarthrobacter aurescens (strain TC1)).